Consider the following 188-residue polypeptide: UPF0398 protein ABC2016 (188 aa).

The protein belongs to the UPF0398 family.

This Shouchella clausii (strain KSM-K16) (Alkalihalobacillus clausii) protein is UPF0398 protein ABC2016.